Consider the following 73-residue polypeptide: Homeodomain-only protein (73 aa).

The homeobox; degenerate DNA-binding region spans 3-62 (TEKSVTPTEEQLEILEYNFCKVNKHPDPTTLCLIAAETGLSEEQTLKWFKQRLAEWRKSE).

It is found in the nucleus. The protein resides in the cytoplasm. Atypical homeodomain protein which does not bind DNA and is required to modulate cardiac growth and development. May act via an interaction with SRF, leading to modulate the expression of SRF-dependent cardiac-specific genes and cardiac development. May act as a co-chaperone for HSPA1A and HSPA1B chaperone proteins and assist in chaperone-mediated protein refolding. The polypeptide is Homeodomain-only protein (HOPX) (Gallus gallus (Chicken)).